Consider the following 460-residue polypeptide: tRNA (guanine(10)-N(2))-methyltransferase TRMT11 (460 aa).

Residue Ala-2 is modified to N-acetylalanine.

This sequence belongs to the class I-like SAM-binding methyltransferase superfamily. TRM11 methyltransferase family. In terms of assembly, part of the heterodimeric TRMT11-TRM112 methyltransferase complex; this complex forms an active tRNA methyltransferase, where TRMT112 acts as an activator of the catalytic subunit TRMT11.

It is found in the cytoplasm. The catalysed reaction is guanosine(10) in tRNA + S-adenosyl-L-methionine = N(2)-methylguanosine(10) in tRNA + S-adenosyl-L-homocysteine + H(+). Catalytic subunit of the TRMT11-TRM112 methyltransferase complex, that specifically mediates the S-adenosyl-L-methionine-dependent N(2)-methylation of guanosine nucleotide at position 10 (m2G10) in tRNAs. This is one of the major tRNA (guanine-N(2))-methyltransferases. This is tRNA (guanine(10)-N(2))-methyltransferase TRMT11 from Bos taurus (Bovine).